A 338-amino-acid polypeptide reads, in one-letter code: Glyceraldehyde-3-phosphate dehydrogenase (338 aa).

NAD(+) contacts are provided by residues 11-12 and G109; that span reads TI. A D-glyceraldehyde 3-phosphate-binding site is contributed by 138 to 140; the sequence is SCN. C139 (nucleophile) is an active-site residue. Residue R167 coordinates NAD(+). D-glyceraldehyde 3-phosphate is bound by residues T169 and 192–193; that span reads HA. An NAD(+)-binding site is contributed by Q299.

Belongs to the glyceraldehyde-3-phosphate dehydrogenase family. Homotetramer.

Its subcellular location is the cytoplasm. It catalyses the reaction D-glyceraldehyde 3-phosphate + phosphate + NADP(+) = (2R)-3-phospho-glyceroyl phosphate + NADPH + H(+). The enzyme catalyses D-glyceraldehyde 3-phosphate + phosphate + NAD(+) = (2R)-3-phospho-glyceroyl phosphate + NADH + H(+). The protein operates within carbohydrate degradation; glycolysis; pyruvate from D-glyceraldehyde 3-phosphate: step 1/5. This is Glyceraldehyde-3-phosphate dehydrogenase from Thermoplasma volcanium (strain ATCC 51530 / DSM 4299 / JCM 9571 / NBRC 15438 / GSS1).